A 119-amino-acid polypeptide reads, in one-letter code: Large ribosomal subunit protein uL24 (119 aa).

Belongs to the universal ribosomal protein uL24 family. In terms of assembly, part of the 50S ribosomal subunit.

Its function is as follows. One of two assembly initiator proteins, it binds directly to the 5'-end of the 23S rRNA, where it nucleates assembly of the 50S subunit. In terms of biological role, one of the proteins that surrounds the polypeptide exit tunnel on the outside of the subunit. The sequence is that of Large ribosomal subunit protein uL24 from Leifsonia xyli subsp. xyli (strain CTCB07).